We begin with the raw amino-acid sequence, 287 residues long: 4-diphosphocytidyl-2-C-methyl-D-erythritol kinase (287 aa).

Lys-12 is a catalytic residue. 97–107 provides a ligand contact to ATP; that stretch reads PMGGGLGGGSS. Residue Asp-139 is part of the active site.

This sequence belongs to the GHMP kinase family. IspE subfamily.

It carries out the reaction 4-CDP-2-C-methyl-D-erythritol + ATP = 4-CDP-2-C-methyl-D-erythritol 2-phosphate + ADP + H(+). It participates in isoprenoid biosynthesis; isopentenyl diphosphate biosynthesis via DXP pathway; isopentenyl diphosphate from 1-deoxy-D-xylulose 5-phosphate: step 3/6. Functionally, catalyzes the phosphorylation of the position 2 hydroxy group of 4-diphosphocytidyl-2C-methyl-D-erythritol. The sequence is that of 4-diphosphocytidyl-2-C-methyl-D-erythritol kinase from Marinobacter nauticus (strain ATCC 700491 / DSM 11845 / VT8) (Marinobacter aquaeolei).